The primary structure comprises 666 residues: DNA mismatch repair protein MutL (666 aa).

The protein belongs to the DNA mismatch repair MutL/HexB family.

Functionally, this protein is involved in the repair of mismatches in DNA. It is required for dam-dependent methyl-directed DNA mismatch repair. May act as a 'molecular matchmaker', a protein that promotes the formation of a stable complex between two or more DNA-binding proteins in an ATP-dependent manner without itself being part of a final effector complex. This chain is DNA mismatch repair protein MutL, found in Clostridium botulinum (strain Loch Maree / Type A3).